A 614-amino-acid polypeptide reads, in one-letter code: UvrABC system protein C (614 aa).

Residues 12–89 (DKPGVYLFRG…IKEHRPRYNV (78 aa)) form the GIY-YIG domain. In terms of domain architecture, UVR spans 198–233 (ADLVRGLARKMEAAAANLEFERAAELRDQLRAVEQV).

This sequence belongs to the UvrC family. Interacts with UvrB in an incision complex.

The protein resides in the cytoplasm. The UvrABC repair system catalyzes the recognition and processing of DNA lesions. UvrC both incises the 5' and 3' sides of the lesion. The N-terminal half is responsible for the 3' incision and the C-terminal half is responsible for the 5' incision. This chain is UvrABC system protein C, found in Desulforudis audaxviator (strain MP104C).